We begin with the raw amino-acid sequence, 1026 residues long: Unconventional myosin-Ic (1026 aa).

At Met-1 the chain carries N-acetylmethionine. The 684-residue stretch at Gly-12–Glu-695 folds into the Myosin motor domain. ATP is bound by residues Asn-53, Tyr-61, Ser-104–Glu-113, and Asn-157–Ser-161. Lys-349 carries the post-translational modification N6-methyllysine. Positions Leu-572–Asp-594 are actin-binding. 2 consecutive IQ domains span residues Lys-698–Val-727 and Ile-721–Thr-750. In terms of domain architecture, TH1 spans Lys-849–Arg-1024.

Belongs to the TRAFAC class myosin-kinesin ATPase superfamily. Myosin family. As to quaternary structure, interacts (via its IQ motifs) with calm.

The protein resides in the cytoplasm. The protein localises to the cell cortex. It is found in the cell projection. Its subcellular location is the ruffle membrane. It localises to the cytoplasmic vesicle. The protein resides in the stereocilium membrane. In terms of biological role, myosins are actin-based motor molecules with ATPase activity. Unconventional myosins serve in intracellular movements. Their highly divergent tails are presumed to bind to membranous compartments, which would be moved relative to actin filaments. The sequence is that of Unconventional myosin-Ic (myo1c) from Danio rerio (Zebrafish).